The sequence spans 88 residues: Small ribosomal subunit protein uS15c (88 aa).

Belongs to the universal ribosomal protein uS15 family. As to quaternary structure, part of the 30S ribosomal subunit.

It is found in the plastid. The protein localises to the chloroplast. This is Small ribosomal subunit protein uS15c (rps15) from Pinus thunbergii (Japanese black pine).